A 291-amino-acid chain; its full sequence is 4-hydroxy-tetrahydrodipicolinate synthase (291 aa).

Threonine 44 contributes to the pyruvate binding site. Tyrosine 132 functions as the Proton donor/acceptor in the catalytic mechanism. Catalysis depends on lysine 160, which acts as the Schiff-base intermediate with substrate. Position 202 (isoleucine 202) interacts with pyruvate.

Belongs to the DapA family. In terms of assembly, homotetramer; dimer of dimers.

It is found in the cytoplasm. It catalyses the reaction L-aspartate 4-semialdehyde + pyruvate = (2S,4S)-4-hydroxy-2,3,4,5-tetrahydrodipicolinate + H2O + H(+). It functions in the pathway amino-acid biosynthesis; L-lysine biosynthesis via DAP pathway; (S)-tetrahydrodipicolinate from L-aspartate: step 3/4. In terms of biological role, catalyzes the condensation of (S)-aspartate-beta-semialdehyde [(S)-ASA] and pyruvate to 4-hydroxy-tetrahydrodipicolinate (HTPA). In Rhizorhabdus wittichii (strain DSM 6014 / CCUG 31198 / JCM 15750 / NBRC 105917 / EY 4224 / RW1) (Sphingomonas wittichii), this protein is 4-hydroxy-tetrahydrodipicolinate synthase.